Consider the following 226-residue polypeptide: Ribosomal RNA small subunit methyltransferase G (226 aa).

S-adenosyl-L-methionine-binding positions include G83, F88, 136 to 137, and R152; that span reads IE. Positions 199–226 are disordered; sequence FSPSQSDPEGSVLKVRGLHGPDGQPHRR.

The protein belongs to the methyltransferase superfamily. RNA methyltransferase RsmG family.

It localises to the cytoplasm. The catalysed reaction is guanosine(527) in 16S rRNA + S-adenosyl-L-methionine = N(7)-methylguanosine(527) in 16S rRNA + S-adenosyl-L-homocysteine. In terms of biological role, specifically methylates the N7 position of guanine in position 527 of 16S rRNA. The protein is Ribosomal RNA small subunit methyltransferase G of Parvibaculum lavamentivorans (strain DS-1 / DSM 13023 / NCIMB 13966).